Consider the following 256-residue polypeptide: Small ribosomal subunit protein uS3 (256 aa).

One can recognise a KH type-2 domain in the interval Ile-39–Arg-111. The segment at Asp-219–Asp-256 is disordered. Over residues Asp-240–Asn-250 the composition is skewed to low complexity.

It belongs to the universal ribosomal protein uS3 family. As to quaternary structure, part of the 30S ribosomal subunit. Forms a tight complex with proteins S10 and S14.

In terms of biological role, binds the lower part of the 30S subunit head. Binds mRNA in the 70S ribosome, positioning it for translation. This is Small ribosomal subunit protein uS3 from Acholeplasma laidlawii (strain PG-8A).